Consider the following 333-residue polypeptide: MTDQAFVTLTTNDAYAKGALVLGSSLKQHRTTRRMVVLTSPQVSDSMRKVLETVFDDVIMVDVLDSGDSAHLTLMKRPELGITLTKLHCWSLTQYSKCVFMDADTLVLSNIDDLFEREELSAAPDPGWPDCFNSGVFVYQPSIETYNQLLHLASEQGSFDGGDQGLLNTYFSGWATTDITKHLPFVYNLSSISIYSYLPAFKAFGKNAKVVHFLGRTKPWNYTYNPQTKSVNCDSQDPTVSHPEFLNLWWDTFTTNVLPLLQHHGLVKDASSYLMMEHVSGALSDLSFGEAPAAPQPSMSSEERKERWEQGQADYMGADSFDNIKRKLDTYLQ.

Residue Thr2 is modified to N-acetylthreonine. 4 residues coordinate UDP: Leu9, Thr11, Asn12, and Tyr15. Residues Leu9, Thr11, Asn12, and Tyr15 each coordinate UDP-alpha-D-glucose. Ser44 bears the Phosphoserine mark. Position 77 (Arg77) interacts with UDP. UDP-alpha-D-glucose is bound by residues Arg77, Lys86, Asp102, Ala103, Asp104, Asn133, Ser134, Asp160, Asp163, and Gln164. Asp102, Ala103, and Asp104 together coordinate UDP. Position 102 (Asp102) interacts with Mn(2+). Asp104 contacts Mn(2+). Tyr195 carries O-linked (Glc...) tyrosine glycosylation. Residues His212, Gly215, and Lys218 each coordinate UDP. His212 serves as a coordination point for Mn(2+). UDP-alpha-D-glucose is bound by residues Gly215 and Lys218. Positions 284-316 (SDLSFGEAPAAPQPSMSSEERKERWEQGQADYM) are interaction with GYS1. The segment at 290 to 316 (EAPAAPQPSMSSEERKERWEQGQADYM) is disordered.

Belongs to the glycosyltransferase 8 family. Glycogenin subfamily. In terms of assembly, part of the GYS1-GYG1 complex, a heterooctamer composed of a tetramer of GYS1 and 2 dimers of GYG1, where each GYS1 protomer binds to one GYG1 subunit (via GYG1 C-terminus); the GYS1 tetramer may dissociate from GYG1 dimers to continue glycogen polymerization on its own. May also form a heterooctamer complex with GYS2. Mn(2+) serves as cofactor. Post-translationally, self-glycosylated by the transfer of glucose residues from UDP-glucose to itself, forming an alpha-1,4-glycan of around 10 residues attached to Tyr-195. Phosphorylated. In terms of tissue distribution, skeletal muscle, heart, to a lesser extent in kidney, lung and brain.

The protein localises to the cytoplasm. It is found in the nucleus. It catalyses the reaction L-tyrosyl-[glycogenin] + UDP-alpha-D-glucose = alpha-D-glucosyl-L-tyrosyl-[glycogenin] + UDP + H(+). The enzyme catalyses [1,4-alpha-D-glucosyl](n)-L-tyrosyl-[glycogenin] + UDP-alpha-D-glucose = [1,4-alpha-D-glucosyl](n+1)-L-tyrosyl-[glycogenin] + UDP + H(+). The protein operates within glycan biosynthesis; glycogen biosynthesis. Functionally, glycogenin participates in the glycogen biosynthetic process along with glycogen synthase and glycogen branching enzyme. It catalyzes the formation of a short alpha (1,4)-glucosyl chain covalently attached via a glucose 1-O-tyrosyl linkage to internal tyrosine residues and these chains act as primers for the elongation reaction catalyzed by glycogen synthase. The sequence is that of Glycogenin-1 from Mus musculus (Mouse).